Here is a 103-residue protein sequence, read N- to C-terminus: uncharacterized protein (103 aa).

This is an uncharacterized protein from Microplitis demolitor (Parasitoid wasp).